Here is a 433-residue protein sequence, read N- to C-terminus: 23S rRNA (uracil(1939)-C(5))-methyltransferase RlmD (433 aa).

A TRAM domain is found at 10–68 (RTTTRQIITVSVNDLDSFGQGVARHNGKTLFIPGLLPQENAEVTVTEDKKQYARAKVVR). The [4Fe-4S] cluster site is built by cysteine 81, cysteine 87, cysteine 90, and cysteine 162. Positions 265, 294, 299, 315, 342, and 363 each coordinate S-adenosyl-L-methionine. Catalysis depends on cysteine 389, which acts as the Nucleophile.

The protein belongs to the class I-like SAM-binding methyltransferase superfamily. RNA M5U methyltransferase family. RlmD subfamily.

It catalyses the reaction uridine(1939) in 23S rRNA + S-adenosyl-L-methionine = 5-methyluridine(1939) in 23S rRNA + S-adenosyl-L-homocysteine + H(+). Catalyzes the formation of 5-methyl-uridine at position 1939 (m5U1939) in 23S rRNA. The sequence is that of 23S rRNA (uracil(1939)-C(5))-methyltransferase RlmD from Shigella boydii serotype 4 (strain Sb227).